A 147-amino-acid chain; its full sequence is UPF0306 protein YPTB0506 (147 aa).

The protein belongs to the UPF0306 family.

This chain is UPF0306 protein YPTB0506, found in Yersinia pseudotuberculosis serotype I (strain IP32953).